A 921-amino-acid chain; its full sequence is Isoleucine--tRNA ligase (921 aa).

A 'HIGH' region motif is present at residues 59-69 (PYANGHLHIGH). Glu569 provides a ligand contact to L-isoleucyl-5'-AMP. The 'KMSKS' region signature appears at 610–614 (KMSKS). Lys613 contacts ATP. The Zn(2+) site is built by Cys894, Cys897, Cys909, and Cys912.

It belongs to the class-I aminoacyl-tRNA synthetase family. IleS type 1 subfamily. Monomer. Zn(2+) is required as a cofactor.

It localises to the cytoplasm. The enzyme catalyses tRNA(Ile) + L-isoleucine + ATP = L-isoleucyl-tRNA(Ile) + AMP + diphosphate. Its function is as follows. Catalyzes the attachment of isoleucine to tRNA(Ile). As IleRS can inadvertently accommodate and process structurally similar amino acids such as valine, to avoid such errors it has two additional distinct tRNA(Ile)-dependent editing activities. One activity is designated as 'pretransfer' editing and involves the hydrolysis of activated Val-AMP. The other activity is designated 'posttransfer' editing and involves deacylation of mischarged Val-tRNA(Ile). The sequence is that of Isoleucine--tRNA ligase from Campylobacter lari (strain RM2100 / D67 / ATCC BAA-1060).